The following is a 2145-amino-acid chain: Mediator of RNA polymerase II transcription subunit 12-like protein (2145 aa).

The interval 1 to 30 is disordered; sequence MAAFGLLSYEQRPLKRPRLGPPDVYPQDPK. Phosphothreonine is present on Thr462. Basic and acidic residues predominate over residues 1436-1455; the sequence is ELEKGQHLGSSSKKERDRQK. Disordered regions lie at residues 1436–1460, 1721–1802, and 2029–2145; these read ELEK…KSMS, RSYY…ISSQ, and DAVL…PSHF. Basic residues predominate over residues 1768–1777; the sequence is TKGRKRKTKS. Low complexity predominate over residues 2052-2069; that stretch reads RQPQVRQQQRLLQMQQPQ. The segment covering 2070-2079 has biased composition (pro residues); it reads QPQPQQPPQP. The segment covering 2089–2099 has biased composition (polar residues); sequence TLGLQAMQPQQ. The segment covering 2104 to 2124 has biased composition (low complexity); sequence RQGLQQTQQQQQTAALVRQLQ. Residues 2125–2136 show a composition bias toward polar residues; that stretch reads KQLSSNQPQQGV.

Belongs to the Mediator complex subunit 12 family. As to quaternary structure, may be a component of the Mediator complex, which is known to be composed of MED1, MED4, MED6, MED7, MED8, MED9, MED10, MED11, MED12, MED13, MED13L, MED14, MED15, MED16, MED17, MED18, MED19, MED20, MED21, MED22, MED23, MED24, MED25, MED26, MED27, MED29, MED30, MED31, CCNC, CDK8 and CDC2L6/CDK11. The MED12, MED13, CCNC and CDK8 subunits form a distinct module termed the CDK8 module. Mediator containing the CDK8 module is less active than Mediator lacking this module in supporting transcriptional activation. Individual preparations of the Mediator complex lacking one or more distinct subunits have been variously termed ARC, CRSP, DRIP, PC2, SMCC and TRAP.

Its subcellular location is the nucleus. Its function is as follows. May be a component of the Mediator complex, a coactivator involved in the regulated transcription of nearly all RNA polymerase II-dependent genes. Mediator functions as a bridge to convey information from gene-specific regulatory proteins to the basal RNA polymerase II transcription machinery. Mediator is recruited to promoters by direct interactions with regulatory proteins and serves as a scaffold for the assembly of a functional preinitiation complex with RNA polymerase II and the general transcription factors. The sequence is that of Mediator of RNA polymerase II transcription subunit 12-like protein (MED12L) from Homo sapiens (Human).